The chain runs to 304 residues: ATP synthase gamma chain (304 aa).

It belongs to the ATPase gamma chain family. As to quaternary structure, F-type ATPases have 2 components, CF(1) - the catalytic core - and CF(0) - the membrane proton channel. CF(1) has five subunits: alpha(3), beta(3), gamma(1), delta(1), epsilon(1). CF(0) has three main subunits: a, b and c.

The protein localises to the cell membrane. Its function is as follows. Produces ATP from ADP in the presence of a proton gradient across the membrane. The gamma chain is believed to be important in regulating ATPase activity and the flow of protons through the CF(0) complex. This chain is ATP synthase gamma chain, found in Chloroherpeton thalassium (strain ATCC 35110 / GB-78).